A 63-amino-acid chain; its full sequence is Large ribosomal subunit protein uL29 (63 aa).

This sequence belongs to the universal ribosomal protein uL29 family.

The polypeptide is Large ribosomal subunit protein uL29 (Actinobacillus pleuropneumoniae serotype 5b (strain L20)).